The chain runs to 165 residues: Cytochrome c-type biogenesis protein CcmE (165 aa).

Over 1–7 the chain is Cytoplasmic; sequence MTRKQKR. Residues 8 to 28 traverse the membrane as a helical; Signal-anchor for type II membrane protein segment; it reads LAVIAGGMGFIIAAVLLVMFA. Topologically, residues 29–165 are periplasmic; that stretch reads FSQSVAYFYM…GQGQEAKATR (137 aa). Positions 124 and 128 each coordinate heme. A compositionally biased stretch (low complexity) spans 144–154; sequence QDGQGAQSQAG. A disordered region spans residues 144 to 165; sequence QDGQGAQSQAGQGQGQEAKATR.

Belongs to the CcmE/CycJ family.

The protein localises to the cell inner membrane. In terms of biological role, heme chaperone required for the biogenesis of c-type cytochromes. Transiently binds heme delivered by CcmC and transfers the heme to apo-cytochromes in a process facilitated by CcmF and CcmH. In Rhizobium etli (strain CIAT 652), this protein is Cytochrome c-type biogenesis protein CcmE.